The primary structure comprises 628 residues: tRNA uridine 5-carboxymethylaminomethyl modification enzyme MnmG (628 aa).

Residues 14-19, Val-126, and Ser-181 each bind FAD; that span reads GAGHAG. NAD(+) is bound at residue 273 to 287; it reads GPRYCPSIEDKVVRF. Gln-370 contributes to the FAD binding site.

The protein belongs to the MnmG family. In terms of assembly, homodimer. Heterotetramer of two MnmE and two MnmG subunits. Requires FAD as cofactor.

It is found in the cytoplasm. Its function is as follows. NAD-binding protein involved in the addition of a carboxymethylaminomethyl (cmnm) group at the wobble position (U34) of certain tRNAs, forming tRNA-cmnm(5)s(2)U34. This Exiguobacterium sibiricum (strain DSM 17290 / CCUG 55495 / CIP 109462 / JCM 13490 / 255-15) protein is tRNA uridine 5-carboxymethylaminomethyl modification enzyme MnmG.